Consider the following 729-residue polypeptide: Fatty acid oxidation complex subunit alpha (729 aa).

The enoyl-CoA hydratase/isomerase stretch occupies residues 1–189; that stretch reads MLYKGDTLYL…KIGLVDGVVK (189 aa). Aspartate 296 is a substrate binding site. The interval 311–729 is 3-hydroxyacyl-CoA dehydrogenase; that stretch reads ETPKQAAVLG…ARPVGSLKTA (419 aa). NAD(+)-binding positions include methionine 324, aspartate 343, 400-402, lysine 407, and serine 429; that span reads VVE. Catalysis depends on histidine 450, which acts as the For 3-hydroxyacyl-CoA dehydrogenase activity. Residue asparagine 453 participates in NAD(+) binding. 2 residues coordinate substrate: asparagine 500 and tyrosine 660. The tract at residues 708–729 is disordered; sequence RHNEPYYPPVEPARPVGSLKTA.

It in the N-terminal section; belongs to the enoyl-CoA hydratase/isomerase family. In the C-terminal section; belongs to the 3-hydroxyacyl-CoA dehydrogenase family. In terms of assembly, heterotetramer of two alpha chains (FadB) and two beta chains (FadA).

The catalysed reaction is a (3S)-3-hydroxyacyl-CoA + NAD(+) = a 3-oxoacyl-CoA + NADH + H(+). It catalyses the reaction a (3S)-3-hydroxyacyl-CoA = a (2E)-enoyl-CoA + H2O. The enzyme catalyses a 4-saturated-(3S)-3-hydroxyacyl-CoA = a (3E)-enoyl-CoA + H2O. It carries out the reaction (3S)-3-hydroxybutanoyl-CoA = (3R)-3-hydroxybutanoyl-CoA. The catalysed reaction is a (3Z)-enoyl-CoA = a 4-saturated (2E)-enoyl-CoA. It catalyses the reaction a (3E)-enoyl-CoA = a 4-saturated (2E)-enoyl-CoA. It participates in lipid metabolism; fatty acid beta-oxidation. In terms of biological role, involved in the aerobic and anaerobic degradation of long-chain fatty acids via beta-oxidation cycle. Catalyzes the formation of 3-oxoacyl-CoA from enoyl-CoA via L-3-hydroxyacyl-CoA. It can also use D-3-hydroxyacyl-CoA and cis-3-enoyl-CoA as substrate. The polypeptide is Fatty acid oxidation complex subunit alpha (Salmonella enteritidis PT4 (strain P125109)).